The chain runs to 170 residues: Sec-independent protein translocase protein TatB (170 aa).

The chain crosses the membrane as a helical span at residues 1-21 (MIDFGFDKIALIGAVALIVIG). The segment at 69-170 (AARNVEQSVS…VARFRPPRPL (102 aa)) is disordered. A compositionally biased stretch (polar residues) spans 73-93 (VEQSVSSEVNRTSSEMNQAWE). Residues 128 to 137 (HPRKNWRLKR) are compositionally biased toward basic residues.

This sequence belongs to the TatB family. In terms of assembly, the Tat system comprises two distinct complexes: a TatABC complex, containing multiple copies of TatA, TatB and TatC subunits, and a separate TatA complex, containing only TatA subunits. Substrates initially bind to the TatABC complex, which probably triggers association of the separate TatA complex to form the active translocon.

It is found in the cell inner membrane. Its function is as follows. Part of the twin-arginine translocation (Tat) system that transports large folded proteins containing a characteristic twin-arginine motif in their signal peptide across membranes. Together with TatC, TatB is part of a receptor directly interacting with Tat signal peptides. TatB may form an oligomeric binding site that transiently accommodates folded Tat precursor proteins before their translocation. In Methylibium petroleiphilum (strain ATCC BAA-1232 / LMG 22953 / PM1), this protein is Sec-independent protein translocase protein TatB.